The sequence spans 612 residues: Elongation factor 4 (612 aa).

The tr-type G domain occupies 11–193 (KHIRNFAIVA…KVVKDIPAPS (183 aa)). GTP-binding positions include 23-28 (DHGKST) and 140-143 (NKID).

It belongs to the TRAFAC class translation factor GTPase superfamily. Classic translation factor GTPase family. LepA subfamily.

The protein localises to the cell membrane. It carries out the reaction GTP + H2O = GDP + phosphate + H(+). In terms of biological role, required for accurate and efficient protein synthesis under certain stress conditions. May act as a fidelity factor of the translation reaction, by catalyzing a one-codon backward translocation of tRNAs on improperly translocated ribosomes. Back-translocation proceeds from a post-translocation (POST) complex to a pre-translocation (PRE) complex, thus giving elongation factor G a second chance to translocate the tRNAs correctly. Binds to ribosomes in a GTP-dependent manner. This chain is Elongation factor 4, found in Lactobacillus helveticus (strain DPC 4571).